A 327-amino-acid chain; its full sequence is Ribose-phosphate pyrophosphokinase (327 aa).

Residues 40–42 (DGE) and 99–100 (RQ) contribute to the ATP site. Mg(2+) contacts are provided by His134 and Asp173. Lys196 is an active-site residue. D-ribose 5-phosphate-binding positions include Arg198, Asp222, and 226 to 230 (DTANT).

It belongs to the ribose-phosphate pyrophosphokinase family. Class I subfamily. Homohexamer. It depends on Mg(2+) as a cofactor.

The protein resides in the cytoplasm. The enzyme catalyses D-ribose 5-phosphate + ATP = 5-phospho-alpha-D-ribose 1-diphosphate + AMP + H(+). It participates in metabolic intermediate biosynthesis; 5-phospho-alpha-D-ribose 1-diphosphate biosynthesis; 5-phospho-alpha-D-ribose 1-diphosphate from D-ribose 5-phosphate (route I): step 1/1. Its function is as follows. Involved in the biosynthesis of the central metabolite phospho-alpha-D-ribosyl-1-pyrophosphate (PRPP) via the transfer of pyrophosphoryl group from ATP to 1-hydroxyl of ribose-5-phosphate (Rib-5-P). In Chromobacterium violaceum (strain ATCC 12472 / DSM 30191 / JCM 1249 / CCUG 213 / NBRC 12614 / NCIMB 9131 / NCTC 9757 / MK), this protein is Ribose-phosphate pyrophosphokinase.